The following is a 282-amino-acid chain: MSKKHLKPLETCFEDEEDDVIYLPPGLVTGATSKKNEEFCGGSGKVQPSEMKRRSEGTSTDMTSKRAKKVSAEDEKKVGEWTKNPYFQRLWSEEDEIVMLQGIIKFEDVTGKSPFEDRHGFIEFVKNSISFEASVQQYIGKISQLKRKYTRKRKNGFSEGHEQKCFKLAMSIWGTKETSKKTDLCSSPKGKKVKEEDGDVTNSDWFENSFLLPSIESLGVDSVKRKWNVVPMEFKKKIEERLELLEADESECKKMEEMLKVKNSECVKQKTNLLNEVIDVMT.

Residues 33-73 (SKKNEEFCGGSGKVQPSEMKRRSEGTSTDMTSKRAKKVSAE) form a disordered region.

It belongs to the GeBP family.

The protein is Probable transcription factor At1g66420 of Arabidopsis thaliana (Mouse-ear cress).